Reading from the N-terminus, the 256-residue chain is Ribosomal RNA small subunit methyltransferase J (256 aa).

S-adenosyl-L-methionine is bound by residues 104–105, 120–121, 156–157, and Asp-174; these read RD, ER, and SS.

Belongs to the methyltransferase superfamily. RsmJ family.

It localises to the cytoplasm. It carries out the reaction guanosine(1516) in 16S rRNA + S-adenosyl-L-methionine = N(2)-methylguanosine(1516) in 16S rRNA + S-adenosyl-L-homocysteine + H(+). In terms of biological role, specifically methylates the guanosine in position 1516 of 16S rRNA. The polypeptide is Ribosomal RNA small subunit methyltransferase J (Yersinia pseudotuberculosis serotype O:1b (strain IP 31758)).